We begin with the raw amino-acid sequence, 1737 residues long: Myosin-M heavy chain (1737 aa).

Residues 4–55 (LEGDIVWVPHTVNGYCRGKIIGYNEKNQVTVRLLELNEEIKINEQLIQNYNQ) enclose the Myosin N-terminal SH3-like domain. The region spanning 59 to 886 (KDFSDMVEIQ…LYIYLEKKRY (828 aa)) is the Myosin motor domain. 154-161 (GESGSGKT) serves as a coordination point for ATP. The tract at residues 640 to 727 (KSNDNNSNNN…NNNSSNNKKS (88 aa)) is disordered. Low complexity-rich tracts occupy residues 641–663 (SNDN…SSQS) and 679–724 (NSGS…SSNN). The interval 754 to 761 (YIRCIKPN) is actin-binding. 2 IQ domains span residues 889–918 (LVDS…SSLF) and 912–941 (NKES…LENK). Residues 926-1039 (QRAKKDFEQL…KKKNEQNLSL (114 aa)) adopt a coiled-coil conformation. The segment covering 947-1028 (RKKELERQRK…IEKKRKEEEK (82 aa)) has biased composition (basic and acidic residues). Disordered regions lie at residues 947 to 1099 (RKKE…PSTK), 1117 to 1199 (LHGS…PNFN), 1266 to 1290 (GINK…ANSS), and 1304 to 1364 (SLST…SNED). Over residues 1044–1070 (ITNSPSLINTTTTTTTTTTTTTNTSSP) the composition is skewed to low complexity. The span at 1071-1081 (PLSPPISPRPS) shows a compositional bias: pro residues. A compositionally biased stretch (low complexity) spans 1082 to 1098 (TPSSTSSSSSTTSSPST). Residues 1121-1131 (SHSDKNSKEDN) are compositionally biased toward basic and acidic residues. Low complexity predominate over residues 1132 to 1141 (NSNNNNNGDS). Residues 1143 to 1153 (IILSSDSSFGQ) are compositionally biased toward polar residues. The segment covering 1162 to 1171 (PTPPPPPPLK) has biased composition (pro residues). Polar residues-rich tracts occupy residues 1180–1198 (GVEN…SPNF) and 1274–1288 (RTIS…SRAN). The span at 1304 to 1359 (SLSTSTTPSTPTTPKTPTTLSSSSVSTSTSLSSVSSSVSSSSSSSIPTPIIESTPS) shows a compositional bias: low complexity. The DH domain occupies 1389 to 1572 (FRIKIINELI…SDIVQSINEA (184 aa)). Positions 1603 to 1714 (TLLMEGTVSA…WFKQIKALIQ (112 aa)) constitute a PH domain.

Belongs to the TRAFAC class myosin-kinesin ATPase superfamily. Myosin family. In terms of assembly, monomer.

Its subcellular location is the cytoplasm. Its function is as follows. Myosins are actin-based motor molecules with ATPase activity. Involved in macropinocytosis and remodeling of actin cytoskeleton. This chain is Myosin-M heavy chain (myoM), found in Dictyostelium discoideum (Social amoeba).